Reading from the N-terminus, the 307-residue chain is Aspartate carbamoyltransferase catalytic subunit (307 aa).

Residues arginine 49 and threonine 50 each coordinate carbamoyl phosphate. Lysine 77 is an L-aspartate binding site. Arginine 99, histidine 127, and glutamine 130 together coordinate carbamoyl phosphate. L-aspartate-binding residues include arginine 160 and arginine 211. The carbamoyl phosphate site is built by alanine 250 and proline 251.

Belongs to the aspartate/ornithine carbamoyltransferase superfamily. ATCase family. Heterododecamer (2C3:3R2) of six catalytic PyrB chains organized as two trimers (C3), and six regulatory PyrI chains organized as three dimers (R2).

The enzyme catalyses carbamoyl phosphate + L-aspartate = N-carbamoyl-L-aspartate + phosphate + H(+). It functions in the pathway pyrimidine metabolism; UMP biosynthesis via de novo pathway; (S)-dihydroorotate from bicarbonate: step 2/3. Catalyzes the condensation of carbamoyl phosphate and aspartate to form carbamoyl aspartate and inorganic phosphate, the committed step in the de novo pyrimidine nucleotide biosynthesis pathway. The sequence is that of Aspartate carbamoyltransferase catalytic subunit from Bacillus pumilus (strain SAFR-032).